The sequence spans 545 residues: MESYKPVWLKGAVILAINLIDKGYKPVAVGLGERDFYIDVKSDTSITLDEVKKAINENVLANVPIENNQIVYKGNKVSIIEDKVSISTNLNPKYFEILNISTHHPNPNEQYVRIRGVAFETEEQLKDYLTWLEKAEETDHRLIGEKLDLFSFHEEAGSGLVLFHPKGQTIRNELIAFMREINDSMGYQEVYTSHVFKTDIWKISGHYTLYRDKLIVFNMEGDEYGVKPMNCPAHILIYKSKPRTYRDLPIRFSEFGHVYRWEKKGELYGLLRVRGFVQDDGHIFLREDQLREEIKMLISKTVEVWHKFGFKDDDIKPYLSTRPDESIGSDELWEKATNALISALQESGLKFGIKEKEGAFYGPKIDFEIRDSLGRWWQLSTIQVDFNLPERFKLEYIDKDGIKKRPVMVHRAIYGSIDRFVAILLEHFKGKLPTWLSSVQVRVLPITDEVNEYAEKVLNDMRKRRIRAEIDYAGETLSKRIKNAYDQGVPYILIVGKKEASEGTVTVRARGNIEVRNVKFEKFLELLITEIAQRDVEQTTVKALK.

Residues 139-433 (DHRLIGEKLD…LLEHFKGKLP (295 aa)) are catalytic. Positions 231, 282, and 410 each coordinate Zn(2+).

The protein belongs to the class-II aminoacyl-tRNA synthetase family. As to quaternary structure, homodimer. Probably interacts with its editing subunit. Zn(2+) serves as cofactor.

It localises to the cytoplasm. The enzyme catalyses tRNA(Thr) + L-threonine + ATP = L-threonyl-tRNA(Thr) + AMP + diphosphate + H(+). Its function is as follows. Catalyzes the attachment of threonine to tRNA(Thr) in a two-step reaction: L-threonine is first activated by ATP to form Thr-AMP and then transferred to the acceptor end of tRNA(Thr). Also activates L-serine and transfers it to tRNA(Thr) but cannot deacylate incorrectly charged amino acid; unlike most archaea the editing function is found in a freestanding protein. The protein is Threonine--tRNA ligase catalytic subunit of Saccharolobus islandicus (strain M.16.27) (Sulfolobus islandicus).